Consider the following 134-residue polypeptide: Large ribosomal subunit protein mL41 (134 aa).

The N-terminal 13 residues, 1-13, are a transit peptide targeting the mitochondrion; that stretch reads MGFLTAVTQGLVR.

It belongs to the mitochondrion-specific ribosomal protein mL41 family. In terms of assembly, component of the mitochondrial ribosome large subunit (39S) which comprises a 16S rRNA and about 50 distinct proteins. Interacts with BCL2. Was also identified in the 28S mitochondrial ribosome.

The protein localises to the mitochondrion. In terms of biological role, component of the mitochondrial ribosome large subunit. Also involved in apoptosis and cell cycle. Enhances p53/TP53 stability, thereby contributing to p53/TP53-induced apoptosis in response to growth-inhibitory condition. Enhances p53/TP53 translocation to the mitochondria. Has the ability to arrest the cell cycle at the G1 phase, possibly by stabilizing the CDKN1A and CDKN1B (p27Kip1) proteins. The polypeptide is Large ribosomal subunit protein mL41 (Mrpl41) (Rattus norvegicus (Rat)).